A 974-amino-acid chain; its full sequence is MSDQKFISIRGAREHNLKNVDLDLPRDKLIVMTGLSGSGKSSLAFDTIYAEGQRRYVESLSAYARQFLEMMQKPDVDQIDGLSPAISIEQKTTSRNPRSTVGTVTEIYDYMRLLFARVGIPYSPATGLPIESQTVSQMVDRVIALEEGTRLYILAPIVRGRKGEYRKELAELQKKGFQRVKVDGTFYEIADVPPLDKKYKHDIDVVVDRVVVRPDLSTRLADSLETCLKLADGLAIAEFADKPLPVGETAEGGSANKSANETHERILFSEKFACPVSGFTIPEIEPRLFSFNNPFGACPTCDGLGTQQAIDPNLIIPDESAALKDGAVAPWARSSSPYYNQTLEALGKAYGFKVSARWSELSEEARQAILYGTKGREITFHYDDGLRSYQTTKPFEGVIPNLERRWKETDSAWSREEIERFMASTPCPACNGYRLKPEALSVKIGKKHIGEITEMSIRKADAWFRDIDGSFNEKQREIAARILKEIRERLQFLNDVGLDYLTLARNSGTLSGGESQRIRLASQIGSGLTGVLYVLDEPSIGLHQRDNARLLDTLRHLRDLGNTVIVVEHDEDAILTADYVVDIGPAAGVHGGKVIAQGSPQDIMANTNSLTGKYLSGAMEVAVPAERRKISKTKRLRVVGARGNNLKNVSADIPLGTFTAVTGVSGGGKSTFLIETLFKAASRRIMGSREHPAEHDRIEGLEFLDKVIDIDQSPIGRTPRSNPATYTGAFTPIRDWFAGLPEAKARGYQPGRFSFNIKGGRCEACQGDGVIKIEMHFLPDVYVTCDVCHGKRYNRETLDVLFKGKSIADVLDMTVEEGAEFFSAVPAVRDKLETLVKVGLGYIKVGQQATTLSGGEAQRVKLAKELSRRATGRTLYILDEPTTGLHFHDVAKLLEVLHELVEQGNTVVVIEHNLEVIKTADWVIDLGPEGGDGGGEIVAVGRPEDIVQEKRSYTGQFLKELLERRPKRSSQAAE.

An ATP-binding site is contributed by 34–41; sequence GLSGSGKS. 2 consecutive ABC transporter domains span residues 331 to 610 and 630 to 959; these read WARS…TNSL and ISKT…QFLK. 663 to 670 provides a ligand contact to ATP; that stretch reads GVSGGGKS. A C4-type zinc finger spans residues 762–788; sequence CEACQGDGVIKIEMHFLPDVYVTCDVC.

It belongs to the ABC transporter superfamily. UvrA family. Forms a heterotetramer with UvrB during the search for lesions.

The protein resides in the cytoplasm. Functionally, the UvrABC repair system catalyzes the recognition and processing of DNA lesions. UvrA is an ATPase and a DNA-binding protein. A damage recognition complex composed of 2 UvrA and 2 UvrB subunits scans DNA for abnormalities. When the presence of a lesion has been verified by UvrB, the UvrA molecules dissociate. This Brucella melitensis biotype 1 (strain ATCC 23456 / CCUG 17765 / NCTC 10094 / 16M) protein is UvrABC system protein A.